Consider the following 266-residue polypeptide: Hydroxyethylthiazole kinase (266 aa).

Met-43 contributes to the substrate binding site. Residues Arg-119 and Thr-166 each coordinate ATP. Position 193 (Gly-193) interacts with substrate.

This sequence belongs to the Thz kinase family. Mg(2+) is required as a cofactor.

The catalysed reaction is 5-(2-hydroxyethyl)-4-methylthiazole + ATP = 4-methyl-5-(2-phosphooxyethyl)-thiazole + ADP + H(+). Its pathway is cofactor biosynthesis; thiamine diphosphate biosynthesis; 4-methyl-5-(2-phosphoethyl)-thiazole from 5-(2-hydroxyethyl)-4-methylthiazole: step 1/1. Catalyzes the phosphorylation of the hydroxyl group of 4-methyl-5-beta-hydroxyethylthiazole (THZ). This chain is Hydroxyethylthiazole kinase, found in Methanococcus maripaludis (strain DSM 14266 / JCM 13030 / NBRC 101832 / S2 / LL).